The following is a 429-amino-acid chain: MNHSRSHALFAQAQTVLPGGVNSPVRAFKSVGGEPFFVARADGSYLFDVDGNRYIDYVGSWGPMIAGHNHPAVREAVERAIRDGLSFGAPCAAEVTMAETITGLVPSCEMVRMVNSGTEATLSAVRLARGATGRNRIIKFEGCYHGHGDSFLVKAGSGMLTLGVPTSPGVPAGLSELTATLSFNDFEGATALFDEIGPEVAAVIIEPVVGNANCIPPQAGYLQHLRTLCTRHGALLIFDEVMTGFRVALGGAQAHYGVTPDLSTFGKIIGGGMPVGAYGGRRDLMEQIAPAGPIYQAGTLSGNPVAMAAGLAMLELVQEPGFHMRLSEATSALCEGLKDAARTAGIAVTTNQVGGMFGLFFTDDIVESYAQATACDITSFNRFFHAMLQRGVYLAPSAYEAGFMSSAHDATVIEATLAAARDAFADVAR.

Lysine 267 is modified (N6-(pyridoxal phosphate)lysine).

It belongs to the class-III pyridoxal-phosphate-dependent aminotransferase family. HemL subfamily. Homodimer. Requires pyridoxal 5'-phosphate as cofactor.

The protein resides in the cytoplasm. It catalyses the reaction (S)-4-amino-5-oxopentanoate = 5-aminolevulinate. It participates in porphyrin-containing compound metabolism; protoporphyrin-IX biosynthesis; 5-aminolevulinate from L-glutamyl-tRNA(Glu): step 2/2. The protein is Glutamate-1-semialdehyde 2,1-aminomutase of Xanthomonas oryzae pv. oryzae (strain MAFF 311018).